A 701-amino-acid polypeptide reads, in one-letter code: L-glutamate oxidase precursor (701 aa).

A signal peptide spans methionine 1 to arginine 14. FAD is bound by residues alanine 69, glutamate 88, alanine 89, arginine 97, methionine 123, arginine 124, methionine 354, and serine 409. The propeptide occupies leucine 481 to arginine 520. FAD contacts are provided by glutamate 645, tryptophan 653, and isoleucine 654. The propeptide occupies arginine 684–serine 701.

Belongs to the flavin monoamine oxidase family. LGOX subfamily. The LGOX precursor forms homodimers. The mature enzyme is a heterohexamer composed of 2 alpha chains, 2 beta chains and 2 gamma chains (alpha2beta2gamma2). The cofactor is FAD. Post-translationally, the precursor form is proteolytically cleaved by an endopeptidase into alpha, beta and gamma chains, which form the stable mature enzyme. Activation by proteolysis occurs after secretion.

The protein resides in the secreted. The enzyme catalyses L-glutamate + O2 + H2O = H2O2 + 2-oxoglutarate + NH4(+). Produced as a single polypeptide precursor and is activated by proteolytic cleavage. The LGOX precursor is an active enzyme, but it exhibits lower catalytic efficiency and lower thermostability compared with the mature hexameric LGOX. The mature form is strongly inhibited by p-chloromercuribenzoate, but not by CuCl(2), EDTA and diethyldithiocarbamate. Functionally, catalyzes the oxidative deamination of L-glutamate to 2-ketoglutarate along with the production of ammonia and hydrogen peroxide. Shows strict substrate specificity for L-glutamate, and exhibits only very weak activity with L-aspartate. The sequence is that of L-glutamate oxidase precursor from Streptomyces sp.